Here is a 139-residue protein sequence, read N- to C-terminus: I-Kappa-B like protein N1 (139 aa).

ANK repeat units follow at residues 16–48 (NGEN…QYLL), 54–87 (EGRK…DVNG), and 92–122 (TGDT…NINA).

Belongs to the polydnaviridae I-Kappa-B-like protein family.

Its function is as follows. Suppresses the host immune response through NF-kappa-B inactivation. Possesses ankyrin repeat domain required for NF-kappa-B binding but lack the regulatory regions required for dissociation from NF-kappa-B and degradation. Therefore, prevents host NF-kappa-B release and subsequent activation. The protein is I-Kappa-B like protein N1 (N2) of Microplitis demolitor bracovirus (isolate Webb) (MdBV).